Here is a 244-residue protein sequence, read N- to C-terminus: 23S rRNA (guanosine-2'-O-)-methyltransferase RlmB (244 aa).

Residues Gly196, Ile216, and Leu225 each coordinate S-adenosyl-L-methionine.

This sequence belongs to the class IV-like SAM-binding methyltransferase superfamily. RNA methyltransferase TrmH family. RlmB subfamily. In terms of assembly, homodimer.

Its subcellular location is the cytoplasm. The catalysed reaction is guanosine(2251) in 23S rRNA + S-adenosyl-L-methionine = 2'-O-methylguanosine(2251) in 23S rRNA + S-adenosyl-L-homocysteine + H(+). In terms of biological role, specifically methylates the ribose of guanosine 2251 in 23S rRNA. The polypeptide is 23S rRNA (guanosine-2'-O-)-methyltransferase RlmB (Pectobacterium atrosepticum (strain SCRI 1043 / ATCC BAA-672) (Erwinia carotovora subsp. atroseptica)).